Here is a 124-residue protein sequence, read N- to C-terminus: Small ribosomal subunit protein uS13 (124 aa).

A disordered region spans residues 99–124 (RGQRTRTNARTRKGPRKTVGVMRKKS). A compositionally biased stretch (basic residues) spans 101–124 (QRTRTNARTRKGPRKTVGVMRKKS).

It belongs to the universal ribosomal protein uS13 family. As to quaternary structure, part of the 30S ribosomal subunit. Forms a loose heterodimer with protein S19. Forms two bridges to the 50S subunit in the 70S ribosome.

Located at the top of the head of the 30S subunit, it contacts several helices of the 16S rRNA. In the 70S ribosome it contacts the 23S rRNA (bridge B1a) and protein L5 of the 50S subunit (bridge B1b), connecting the 2 subunits; these bridges are implicated in subunit movement. Contacts the tRNAs in the A and P-sites. This Caldicellulosiruptor bescii (strain ATCC BAA-1888 / DSM 6725 / KCTC 15123 / Z-1320) (Anaerocellum thermophilum) protein is Small ribosomal subunit protein uS13.